A 359-amino-acid chain; its full sequence is SAGA complex subunit Spt7 (359 aa).

As to quaternary structure, component of the Spt-Ada-Gcn5 acetyltransferase (SAGA) complex consisting of wda/Taf5L, Saf6, Taf9, Taf10b, Taf12, Ada1, Spt3, Spt7, Spt20, Sf3b3, Sf3b5, Nipped-A/Tra1, a histone acetyltransferase (HAT) module made up of Gcn5, Ada2b (Isoform B), Ada3 and Sgf29, and a deubiquitinase (DUB) module made up of not/nonstop, Sgf11 and e(y)2 tethered to SAGA by Atxn7. Interacts with Ada2b; the interaction is direct.

It is found in the nucleus. In terms of biological role, component of the transcription regulatory complex SAGA, a multiprotein complex that activates transcription by remodeling chromatin and mediating histone acetylation and deubiquitination. The SAGA complex predominantly acetylates histone H3. In Drosophila melanogaster (Fruit fly), this protein is SAGA complex subunit Spt7.